The following is a 95-amino-acid chain: Stationary phase-expressed protein 1 (95 aa).

A helical transmembrane segment spans residues 20–38 (FRYIMLGLVGAAVVPTAYM).

It is found in the mitochondrion membrane. This is Stationary phase-expressed protein 1 (SPG1) from Saccharomyces cerevisiae (strain RM11-1a) (Baker's yeast).